We begin with the raw amino-acid sequence, 352 residues long: Glycerol-1-phosphate dehydrogenase [NAD(P)+] (352 aa).

NAD(+) contacts are provided by residues 98-102 (GKAID) and 120-123 (TAAS). Residue Asp125 participates in substrate binding. Ser129 provides a ligand contact to NAD(+). Asp172 contacts substrate. Residues Asp172 and His252 each coordinate Zn(2+). His256 provides a ligand contact to substrate. His268 serves as a coordination point for Zn(2+).

It belongs to the glycerol-1-phosphate dehydrogenase family. Zn(2+) is required as a cofactor.

It is found in the cytoplasm. It carries out the reaction sn-glycerol 1-phosphate + NAD(+) = dihydroxyacetone phosphate + NADH + H(+). It catalyses the reaction sn-glycerol 1-phosphate + NADP(+) = dihydroxyacetone phosphate + NADPH + H(+). It participates in membrane lipid metabolism; glycerophospholipid metabolism. In terms of biological role, catalyzes the NAD(P)H-dependent reduction of dihydroxyacetonephosphate (DHAP or glycerone phosphate) to glycerol 1-phosphate (G1P). The G1P thus generated is used as the glycerophosphate backbone of phospholipids in the cellular membranes of Archaea. In Halobacterium salinarum (strain ATCC 29341 / DSM 671 / R1), this protein is Glycerol-1-phosphate dehydrogenase [NAD(P)+].